The following is a 290-amino-acid chain: MRSTLLAFALAVALPAAHTSAAEVPLPQLRAYTVDASWLQPMAPLQIADHTWQIGTEDLTALLVQTPDGAVLLDGGMPQMASHLLDNMKARGVTPRDLRLILLSHAHADHAGPVAELKRRTGAKVAANAESAVLLARGGSDDLHFGDGITYPPANADRIVMDGEVITVGGIVFTAHFMAGHTPGSTAWTWTDTRNGKPVRIAYADSLSAPGYQLQGNPRYPHLIEDYRRSFATVRALPCDVLLTPHPGASNWDYAAGARAGAKALTCKAYADAAEQKFDGQLAKETAGAR.

The N-terminal stretch at 1 to 21 is a signal peptide; the sequence is MRSTLLAFALAVALPAAHTSA. Residues 22–33 constitute a propeptide that is removed on maturation; the sequence is AEVPLPQLRAYT. 5 residues coordinate Zn(2+): His105, His107, Asp109, His110, and His181. Asp205 is a binding site for substrate. The cysteines at positions 239 and 267 are disulfide-linked. Residue His246 coordinates Zn(2+).

Belongs to the metallo-beta-lactamase superfamily. Class-B beta-lactamase family. In terms of assembly, homotetramer. It depends on Zn(2+) as a cofactor.

The protein resides in the periplasm. The catalysed reaction is a beta-lactam + H2O = a substituted beta-amino acid. Inhibited by Hg(2+) or Cu(2+), and by chelating agents such as EDTA and O-phenanthroline. Reduced enzymatic activity in presence of cobalt, nickel, cadmium, and manganese. Confers resistance to the different beta-lactams antibiotics (penicillin, cephalosporin and carbapenem) via the hydrolysis of the beta-lactam ring. The sequence is that of Metallo-beta-lactamase L1 type 3 from Stenotrophomonas maltophilia (Pseudomonas maltophilia).